The primary structure comprises 499 residues: Inosine-5'-monophosphate dehydrogenase (499 aa).

CBS domains follow at residues 106-165 and 169-225; these read IDRE…SDAV and MTDE…GSAA. NAD(+) is bound by residues D260 and 308 to 310; that span reads GIG. 2 residues coordinate K(+): G310 and G312. S313 is an IMP binding site. C315 serves as a coordination point for K(+). The active-site Thioimidate intermediate is C315. IMP-binding positions include 348–350, 371–372, and 395–399; these read DGG, GS, and YRGMG. R411 functions as the Proton acceptor in the catalytic mechanism. E425 lines the IMP pocket. The K(+) site is built by E479, G480, and H481. Positions 480-499 are disordered; that stretch reads GHPHDVMITDEAPNYSPQGE.

Belongs to the IMPDH/GMPR family. As to quaternary structure, homotetramer. K(+) is required as a cofactor.

It carries out the reaction IMP + NAD(+) + H2O = XMP + NADH + H(+). Its pathway is purine metabolism; XMP biosynthesis via de novo pathway; XMP from IMP: step 1/1. Its activity is regulated as follows. Mycophenolic acid (MPA) is a non-competitive inhibitor that prevents formation of the closed enzyme conformation by binding to the same site as the amobile flap. In contrast, mizoribine monophosphate (MZP) is a competitive inhibitor that induces the closed conformation. MPA is a potent inhibitor of mammalian IMPDHs but a poor inhibitor of the bacterial enzymes. MZP is a more potent inhibitor of bacterial IMPDH. Functionally, catalyzes the conversion of inosine 5'-phosphate (IMP) to xanthosine 5'-phosphate (XMP), the first committed and rate-limiting step in the de novo synthesis of guanine nucleotides, and therefore plays an important role in the regulation of cell growth. The polypeptide is Inosine-5'-monophosphate dehydrogenase (Halobacterium salinarum (strain ATCC 700922 / JCM 11081 / NRC-1) (Halobacterium halobium)).